A 356-amino-acid polypeptide reads, in one-letter code: sn-glycerol-3-phosphate import ATP-binding protein UgpC (356 aa).

In terms of domain architecture, ABC transporter spans 4–235 (LKLQAVTKSW…PASLFVASFI (232 aa)). 37 to 44 (GPSGCGKS) contacts ATP.

It belongs to the ABC transporter superfamily. sn-glycerol-3-phosphate importer (TC 3.A.1.1.3) family. As to quaternary structure, the complex is composed of two ATP-binding proteins (UgpC), two transmembrane proteins (UgpA and UgpE) and a solute-binding protein (UgpB).

The protein resides in the cell inner membrane. It carries out the reaction sn-glycerol 3-phosphate(out) + ATP + H2O = sn-glycerol 3-phosphate(in) + ADP + phosphate + H(+). Part of the ABC transporter complex UgpBAEC involved in sn-glycerol-3-phosphate (G3P) import. Responsible for energy coupling to the transport system. This is sn-glycerol-3-phosphate import ATP-binding protein UgpC from Escherichia coli O6:H1 (strain CFT073 / ATCC 700928 / UPEC).